A 228-amino-acid chain; its full sequence is Orotidine 5'-phosphate decarboxylase (228 aa).

Substrate contacts are provided by residues D20, K42, 70 to 79 (DFKVADIPET), S127, 180 to 190 (PGVGAQGGDPG), G202, and R203. Catalysis depends on K72, which acts as the Proton donor.

It belongs to the OMP decarboxylase family. Type 1 subfamily. As to quaternary structure, homodimer.

It carries out the reaction orotidine 5'-phosphate + H(+) = UMP + CO2. Its pathway is pyrimidine metabolism; UMP biosynthesis via de novo pathway; UMP from orotate: step 2/2. Functionally, catalyzes the decarboxylation of orotidine 5'-monophosphate (OMP) to uridine 5'-monophosphate (UMP). The protein is Orotidine 5'-phosphate decarboxylase (pyrF) of Methanothermobacter thermautotrophicus (strain ATCC 29096 / DSM 1053 / JCM 10044 / NBRC 100330 / Delta H) (Methanobacterium thermoautotrophicum).